We begin with the raw amino-acid sequence, 98 residues long: Keratin-associated protein 3-3 (98 aa).

Repeat copies occupy residues 3–7 (CCASR), 47–51 (CCDNC), and 89–93 (CCEPC). The segment at 3 to 59 (CCASRGCSVPTGPATTICSSDKSCRCGVCLPSTCPHTVWLLEPTCCDNCPPPCHIPQ) is 3 X 5 AA repeats of C-C-X(3).

Belongs to the KRTAP type 3 family. Interacts with hair keratins. Localized to the upper cortex of the hair shaft.

Functionally, in the hair cortex, hair keratin intermediate filaments are embedded in an interfilamentous matrix, consisting of hair keratin-associated proteins (KRTAP), which are essential for the formation of a rigid and resistant hair shaft through their extensive disulfide bond cross-linking with abundant cysteine residues of hair keratins. The matrix proteins include the high-sulfur and high-glycine-tyrosine keratins. This is Keratin-associated protein 3-3 (KRTAP3-3) from Homo sapiens (Human).